A 173-amino-acid polypeptide reads, in one-letter code: Inorganic pyrophosphatase (173 aa).

Positions 29, 43, and 55 each coordinate substrate. D65, D70, and D102 together coordinate Mg(2+). Y141 contacts substrate.

Belongs to the PPase family. As to quaternary structure, homohexamer. The cofactor is Mg(2+).

The protein resides in the cytoplasm. The catalysed reaction is diphosphate + H2O = 2 phosphate + H(+). Catalyzes the hydrolysis of inorganic pyrophosphate (PPi) forming two phosphate ions. This is Inorganic pyrophosphatase from Gluconobacter oxydans (strain 621H) (Gluconobacter suboxydans).